Consider the following 229-residue polypeptide: Cytidylate kinase (229 aa).

12–20 (GPSGAGKGT) serves as a coordination point for ATP.

It belongs to the cytidylate kinase family. Type 1 subfamily.

The protein localises to the cytoplasm. It catalyses the reaction CMP + ATP = CDP + ADP. The catalysed reaction is dCMP + ATP = dCDP + ADP. This is Cytidylate kinase from Pseudomonas paraeruginosa (strain DSM 24068 / PA7) (Pseudomonas aeruginosa (strain PA7)).